Consider the following 353-residue polypeptide: Probable transport protein YPL264C (353 aa).

The Cytoplasmic segment spans residues 1-16 (MTLQRISKDYLKPNYG). A helical membrane pass occupies residues 17–37 (LILLIVSYFFNSSMVVSTKVL). One can recognise an EamA 1 domain in the interval 24 to 160 (YFFNSSMVVS…SFSGVVLIIR (137 aa)). Residues 38–51 (ENDPLETSQSRINP) are Extracellular-facing. Residues 52–69 (LQILLVRMSITYCCTLVY) traverse the membrane as a helical segment. Residues 70-94 (MHWNKQSVPDIPWGPAPCRKWLILR) lie on the Cytoplasmic side of the membrane. A helical membrane pass occupies residues 95 to 115 (GIMGFFGVFGMYFSLMYLSIS). Position 116 (aspartate 116) is a topological domain, extracellular. The helical transmembrane segment at 117 to 137 (AVLITFMSPTLTIFLSFLLLG) threads the bilayer. At 138 to 144 (EPFSKLE) the chain is on the cytoplasmic side. Residues 145-165 (ALGSLISFSGVVLIIRPTFLF) traverse the membrane as a helical segment. Residues 166–188 (GEQTQGQQSPQDDIVETQNPKLR) are Extracellular-facing. Residues 189–209 (LIAIGVSLLGVCGLSSVYIII) traverse the membrane as a helical segment. Residues 200–326 (CGLSSVYIII…IVSSTIWVIN (127 aa)) form the EamA 2 domain. Over 210–218 (RYIGNKAHA) the chain is Cytoplasmic. Residues 219 to 239 (IMSVSYFSLVTTVVAALGVLL) traverse the membrane as a helical segment. Over 240–254 (IPSMSLQLPHSWKQW) the chain is Extracellular. Residues 255–275 (GLFLNLGISGFIHQILLTMGI) form a helical membrane-spanning segment. At 276–282 (QRERAGR) the chain is on the cytoplasmic side. A helical membrane pass occupies residues 283–303 (GSLMTYTQVIYAVFWDVVLFH). Position 304 (histidine 304) is a topological domain, extracellular. The helical transmembrane segment at 305-325 (WPNIWTWCGMAVIVSSTIWVI) threads the bilayer. At 326 to 353 (NMRASKQNVVATAELLSTSDFELDDLED) the chain is on the cytoplasmic side.

The protein localises to the membrane. This Saccharomyces cerevisiae (strain ATCC 204508 / S288c) (Baker's yeast) protein is Probable transport protein YPL264C.